We begin with the raw amino-acid sequence, 199 residues long: Phosphatidylethanolamine N-methyltransferase (199 aa).

The Lumenal segment spans residues 2 to 12 (SWLLGYVDPTE). The segment at residues 13–33 (PSFVAAVLTIVFNPLFWNVVA) is an intramembrane region (helical). Residues 34–45 (RWEQRTRKLSRA) lie on the Lumenal side of the membrane. Residues 46-66 (FGSPYLACYSLGSIILLLNIL) traverse the membrane as a helical segment. The Cytoplasmic portion of the chain corresponds to 67–93 (RSHCFTQAMMSQPKMEGLDSHTIYFLG). A helical membrane pass occupies residues 94-114 (LALLGWGLVFVLSSFYALGFT). Residue 98-100 (GWG) coordinates S-adenosyl-L-methionine. At 115–157 (GTFLGDYFGILKESRVTTFPFSVLDNPMYWGSTANYLGWALMH) the chain is on the lumenal side. A helical transmembrane segment spans residues 158 to 178 (ASPTGLLLTVLVALVYVVALL). Topologically, residues 179 to 199 (FEEPFTAEIYRRKATRLHKRS) are cytoplasmic. 180-181 (EE) is an S-adenosyl-L-methionine binding site.

This sequence belongs to the class VI-like SAM-binding methyltransferase superfamily. PEMT/PEM2 methyltransferase family. In terms of tissue distribution, expressed in liver (at protein level).

It is found in the endoplasmic reticulum membrane. Its subcellular location is the mitochondrion membrane. The catalysed reaction is a 1,2-diacyl-sn-glycero-3-phosphoethanolamine + S-adenosyl-L-methionine = a 1,2-diacyl-sn-glycero-3-phospho-N-methylethanolamine + S-adenosyl-L-homocysteine + H(+). It catalyses the reaction a 1,2-diacyl-sn-glycero-3-phospho-N-methylethanolamine + S-adenosyl-L-methionine = a 1,2-diacyl-sn-glycero-3-phospho-N,N-dimethylethanolamine + S-adenosyl-L-homocysteine + H(+). The enzyme catalyses a 1,2-diacyl-sn-glycero-3-phospho-N,N-dimethylethanolamine + S-adenosyl-L-methionine = a 1,2-diacyl-sn-glycero-3-phosphocholine + S-adenosyl-L-homocysteine + H(+). It carries out the reaction 1,2-di-(9Z-octadecenoyl)-sn-glycero-3-phosphoethanolamine + S-adenosyl-L-methionine = 1,2-di-(9Z-octadecenoyl)-sn-glycero-3-phospho-N-methylethanolamine + S-adenosyl-L-homocysteine + H(+). The catalysed reaction is 1,2-di-(9Z-octadecenoyl)-sn-glycero-3-phospho-N-methylethanolamine + S-adenosyl-L-methionine = 1,2-di-(9Z-octadecenoyl)-sn-glycero-3-phospho-N,N-dimethylethanolamine + S-adenosyl-L-homocysteine + H(+). It catalyses the reaction 1,2-di-(9Z-octadecenoyl)-sn-glycero-3-phospho-N,N-dimethylethanolamine + S-adenosyl-L-methionine = 1,2-di-(9Z-octadecenoyl)-sn-glycero-3-phosphocholine + S-adenosyl-L-homocysteine + H(+). The enzyme catalyses 1,2-di-(9Z,12Z-octadecadienoyl)-sn-glycero-3-phosphoethanolamine + S-adenosyl-L-methionine = 1,2-di-(9Z,12Z-octadecadienoyl)-sn-glycero-3-phospho-N-methylethanolamine + S-adenosyl-L-homocysteine + H(+). It carries out the reaction 1,2-di-(9Z,12Z-octadecadienoyl)-sn-glycero-3-phospho-N-methylethanolamine + S-adenosyl-L-methionine = 1,2-di-(9Z,12Z-octadecadienoyl)-sn-glycero-3-phospho-N,N-dimethylethanolamine + S-adenosyl-L-homocysteine + H(+). The catalysed reaction is 1,2-di-(9Z,12Z-octadecadienoyl)-sn-glycero-3-phospho-N,N-dimethylethanolamine + S-adenosyl-L-methionine = 1,2-di-(9Z,12Z-octadecadienoyl)-sn-glycero-3-phosphocholine + S-adenosyl-L-homocysteine + H(+). It catalyses the reaction 1,2-di-(9Z,12Z,15Z-octadecatrienoyl)-sn-glycero-3-phosphoethanolamine + S-adenosyl-L-methionine = 1,2-di-(9Z,12Z,15Z-octadecatrienoyl)-sn-glycero-3-phospho-N-methylethanolamine + S-adenosyl-L-homocysteine + H(+). The enzyme catalyses 1,2-di-(9Z,12Z,15Z-octadecatrienoyl)-sn-glycero-3-phospho-N-methylethanolamine + S-adenosyl-L-methionine = 1,2-di-(9Z,12Z,15Z-octadecatrienoyl)-sn-glycero-3-phospho-N,N-dimethylethanolamine + S-adenosyl-L-homocysteine + H(+). It carries out the reaction 1,2-di-(9Z,12Z,15Z-octadecatrienoyl)-sn-glycero-3-phospho-N,N-dimethylethanolamine + S-adenosyl-L-methionine = 1,2-di-(9Z,12Z,15Z-octadecatrienoyl)-sn-glycero-3-phosphocholine + S-adenosyl-L-homocysteine + H(+). The catalysed reaction is 1-hexadecanoyl-2-(4Z,7Z,10Z,13Z,16Z,19Z-docosahexaenoyl)-sn-glycero-3-phosphoethanolamine + S-adenosyl-L-methionine = 1-hexadecanoyl-2-(4Z,7Z,10Z,13Z,16Z,19Z-docosahexaenoyl)-sn-glycero-3-phospho-N-methylethanolamine + S-adenosyl-L-homocysteine + H(+). It catalyses the reaction 1-hexadecanoyl-2-(4Z,7Z,10Z,13Z,16Z,19Z-docosahexaenoyl)-sn-glycero-3-phospho-N-methylethanolamine + S-adenosyl-L-methionine = 1-hexadecanoyl-2-(4Z,7Z,10Z,13Z,16Z,19Z-docosahexaenoyl)-sn-glycero-3-phospho-N,N-dimethylethanolamine + S-adenosyl-L-homocysteine + H(+). The enzyme catalyses 1-hexadecanoyl-2-(4Z,7Z,10Z,13Z,16Z,19Z-docosahexaenoyl)-sn-glycero-3-phospho-N,N-dimethylethanolamine + S-adenosyl-L-methionine = 1-hexadecanoyl-2-(4Z,7Z,10Z,13Z,16Z,19Z-docosahexaenoyl)-sn-glycero-3-phosphocholine + S-adenosyl-L-homocysteine + H(+). It participates in phospholipid metabolism; phosphatidylcholine biosynthesis. Its function is as follows. Catalyzes the three sequential steps of the methylation pathway for the biosynthesis of phosphatidylcholine, a critical and essential component for membrane structure. Uses S-adenosylmethionine (S-adenosyl-L-methionine, SAM or AdoMet) as the methyl group donor for the methylation of phosphatidylethanolamine (1,2-diacyl-sn-glycero-3-phosphoethanolamine, PE) to phosphatidylmonomethylethanolamine (1,2-diacyl-sn-glycero-3-phospho-N-methylethanolamine, PMME), PMME to phosphatidyldimethylethanolamine (1,2-diacyl-sn-glycero-3-phospho-N,N-dimethylethanolamine, PDME), and PDME to phosphatidylcholine (1,2-diacyl-sn-glycero-3-phosphocholine, PC), producing S-adenosyl-L-homocysteine in each step. The chain is Phosphatidylethanolamine N-methyltransferase from Rattus norvegicus (Rat).